The sequence spans 1372 residues: Putative Polyprotein CP (1372 aa).

Coiled-coil stretches lie at residues 126-153 (NKEN…LKNI) and 299-350 (EKQK…EELD). The interval 372-398 (SESSEINEISDNETEQISGSDSDYNNE) is disordered. Residues 386 to 398 (EQISGSDSDYNNE) show a composition bias toward polar residues. The CCHC-type zinc-finger motif lies at 739-756 (CKCYNCGEEGHISPNCKK). A coiled-coil region spans residues 1162–1189 (DDRTNIQREKDQIEKADHNLELQKELNN).

The protein resides in the virion. In Cassava vein mosaic virus (CsVMV), this protein is Putative Polyprotein CP.